The primary structure comprises 489 residues: Transmembrane protein 161A (489 aa).

Residues 1-23 (MAVMGIQMVVTLLVASLMQRVSP) form the signal peptide. Topologically, residues 24–98 (HYSFGRWLLC…INTMDALVLR (75 aa)) are extracellular. Residue N34 is glycosylated (N-linked (GlcNAc...) asparagine). A helical membrane pass occupies residues 99–119 (YFLEYQWFIDFALYSTIIYLF). Over 120–134 (TEAYYCVVDAQNEIN) the chain is Cytoplasmic. A helical transmembrane segment spans residues 135-155 (IGVLWCLMSIIFSIKVLFTVM). The Extracellular portion of the chain corresponds to 156-166 (KHYFRSEEGGE). The helical transmembrane segment at 167–187 (RSVCMTFAFFFLLIAMIVTIV) threads the bilayer. The Cytoplasmic segment spans residues 188–224 (RDEYLEFGLEPGLASVCHNLENFLAQQGWQWSMPFVK). Residues 225 to 245 (LAFKIALVALCAFLGGCLTFP) form a helical membrane-spanning segment. Topologically, residues 246 to 264 (GLRLAQTHLDALKMAADRP) are extracellular. Residues 265-285 (MLQLLLHMSFLPPVIVVVLWI) form a helical membrane-spanning segment. The Cytoplasmic portion of the chain corresponds to 286-304 (RPITRDFLLNAPMGKESVE). Residues 305–325 (LMSNSAYNTFRLWIIVLLCLL) form a helical membrane-spanning segment. Residues 326-370 (RFCLTRFHLQAYLCLADRWVEQMKREAGRISMLEIQRKISRIFCY) lie on the Extracellular side of the membrane. Residues 371–391 (LTVVALQYLAPVILTFHCVFM) form a helical membrane-spanning segment. Topologically, residues 392-459 (LKSLGDYSWG…GLFTPLFFRG (68 aa)) are cytoplasmic. The interval 413–432 (VDSSPVQSHSPTSEEEEDTE) is disordered. A helical membrane pass occupies residues 460–480 (IFSFLTWWVSVCQIITSLFGL). The Extracellular segment spans residues 481–489 (YFHQYLGAS).

It belongs to the TMEM161 family.

It localises to the membrane. May play a role in protection against oxidative stress. The sequence is that of Transmembrane protein 161A (tmem161a) from Xenopus laevis (African clawed frog).